A 282-amino-acid polypeptide reads, in one-letter code: Protoheme IX farnesyltransferase (282 aa).

The next 9 helical transmembrane spans lie at 9–29, 39–59, 79–99, 102–122, 139–159, 165–185, 210–230, 231–251, and 261–281; these read LAKP…FLLA, LPLF…GCVF, LVTG…LLIL, LVLY…GFIV, VLGG…VVNI, LALF…IAML, IMLF…VLGS, ADLF…YKSI, and VFAK…CLTM.

It belongs to the UbiA prenyltransferase family. Protoheme IX farnesyltransferase subfamily.

The protein resides in the cell inner membrane. It carries out the reaction heme b + (2E,6E)-farnesyl diphosphate + H2O = Fe(II)-heme o + diphosphate. The protein operates within porphyrin-containing compound metabolism; heme O biosynthesis; heme O from protoheme: step 1/1. Functionally, converts heme B (protoheme IX) to heme O by substitution of the vinyl group on carbon 2 of heme B porphyrin ring with a hydroxyethyl farnesyl side group. The chain is Protoheme IX farnesyltransferase from Francisella tularensis subsp. holarctica (strain FTNF002-00 / FTA).